We begin with the raw amino-acid sequence, 424 residues long: Geranylgeranyl pyrophosphate synthase D (424 aa).

Residues 42-73 (PSATWPSVPKVHKRNRSTSLSDQQTAKKAHAN) are disordered. Over residues 58–67 (STSLSDQQTA) the composition is skewed to polar residues. 3 residues coordinate isopentenyl diphosphate: lysine 147, arginine 150, and histidine 179. Aspartate 186 and aspartate 190 together coordinate Mg(2+). Arginine 195 provides a ligand contact to dimethylallyl diphosphate. Position 196 (arginine 196) interacts with isopentenyl diphosphate. Residues lysine 274, threonine 275, glutamine 311, lysine 328, and lysine 338 each contribute to the dimethylallyl diphosphate site.

It belongs to the FPP/GGPP synthase family. Requires Mg(2+) as cofactor.

Its subcellular location is the cytoplasm. It catalyses the reaction isopentenyl diphosphate + dimethylallyl diphosphate = (2E)-geranyl diphosphate + diphosphate. The catalysed reaction is isopentenyl diphosphate + (2E)-geranyl diphosphate = (2E,6E)-farnesyl diphosphate + diphosphate. It carries out the reaction isopentenyl diphosphate + (2E,6E)-farnesyl diphosphate = (2E,6E,10E)-geranylgeranyl diphosphate + diphosphate. It participates in isoprenoid biosynthesis; farnesyl diphosphate biosynthesis; farnesyl diphosphate from geranyl diphosphate and isopentenyl diphosphate: step 1/1. Its pathway is isoprenoid biosynthesis; geranyl diphosphate biosynthesis; geranyl diphosphate from dimethylallyl diphosphate and isopentenyl diphosphate: step 1/1. It functions in the pathway isoprenoid biosynthesis; geranylgeranyl diphosphate biosynthesis; geranylgeranyl diphosphate from farnesyl diphosphate and isopentenyl diphosphate: step 1/1. Its function is as follows. Catalyzes the trans-addition of the 3 molecules of isopentenyl diphosphate (IPP) onto dimethylallyl diphosphate (DMAPP) to form geranylgeranyl pyrophosphate (GGDP). This chain is Geranylgeranyl pyrophosphate synthase D (GGS-D), found in Phomopsis amygdali (Fusicoccum amygdali).